Reading from the N-terminus, the 119-residue chain is Succinate dehydrogenase assembly factor 2, mitochondrial (119 aa).

Belongs to the SDHAF2 family. As to quaternary structure, interacts with the flavoprotein subunit within the SDH catalytic dimer.

Its subcellular location is the mitochondrion matrix. Plays an essential role in the assembly of succinate dehydrogenase (SDH), an enzyme complex (also referred to as respiratory complex II) that is a component of both the tricarboxylic acid (TCA) cycle and the mitochondrial electron transport chain, and which couples the oxidation of succinate to fumarate with the reduction of ubiquinone (coenzyme Q) to ubiquinol. Required for flavinylation (covalent attachment of FAD) of the flavoprotein subunit of the SDH catalytic dimer. This is Succinate dehydrogenase assembly factor 2, mitochondrial from Caenorhabditis elegans.